A 1543-amino-acid chain; its full sequence is Tubby-related protein 4 (1543 aa).

7 WD repeats span residues 6–72, 73–115, 116–158, 159–237, 238–276, 277–334, and 335–372; these read EHGP…STPQ, RINF…YEGR, WSVE…SGQR, HWSS…SDDY, APPQ…YDDL, SPTV…GEHI, and FTLD…RVEH. The SOCS box domain maps to 364-414; sequence ALYVVRVEHRVSSLQLLCQQAIASTLREDKDVSKLTLPPRLCSYLSTAFIP. 2 disordered regions span residues 530–577 and 829–850; these read SPKI…SVGS and TKIN…TAAP. Ser-577 bears the Phosphoserine mark. An asymmetric dimethylarginine mark is found at Arg-945 and Arg-950. Disordered regions lie at residues 1004–1058, 1326–1355, and 1367–1453; these read SPRA…HTAS, VPQR…AITE, and DFNS…ASEK. The segment covering 1036–1050 has biased composition (polar residues); sequence TCSQCSGTGPSSQPG. Positions 1329 to 1347 are enriched in basic and acidic residues; it reads RTEKFGKKNRKRLDSRAEE. A phosphoserine mark is found at Ser-1343 and Ser-1374. Residues 1443–1453 show a composition bias toward basic and acidic residues; the sequence is EEAKCRRASEK. A TUB region spans residues 1466 to 1543; sequence VMANKQPLWN…ALANVTQRLK (78 aa).

Belongs to the TUB family. In terms of tissue distribution, expressed mainly in the brain, skeletal muscle, testis and kidney.

It is found in the cytoplasm. Its pathway is protein modification; protein ubiquitination. May be a substrate-recognition component of a SCF-like ECS (Elongin-Cullin-SOCS-box protein) E3 ubiquitin ligase complex which mediates the ubiquitination and subsequent proteasomal degradation of target proteins. This Homo sapiens (Human) protein is Tubby-related protein 4 (TULP4).